We begin with the raw amino-acid sequence, 533 residues long: Probable fucosyltransferase 5 (533 aa).

Residues 1–13 (MYQKFQISGKIVK) are Cytoplasmic-facing. Residues 14-34 (TLGLKMKVLIAVSFGSLLFIL) traverse the membrane as a helical; Signal-anchor for type II membrane protein segment. Residues 35–533 (SYSNNFNNKL…YGGLKLYDEF (499 aa)) lie on the Lumenal side of the membrane. 5 N-linked (GlcNAc...) asparagine glycosylation sites follow: asparagine 202, asparagine 227, asparagine 374, asparagine 396, and asparagine 475.

This sequence belongs to the glycosyltransferase 37 family. Expressed in roots, leaves, flowers and siliques.

It localises to the golgi apparatus. The protein localises to the golgi stack membrane. The protein operates within protein modification; protein glycosylation. May be involved in cell wall biosynthesis. May act as a fucosyltransferase. This Arabidopsis thaliana (Mouse-ear cress) protein is Probable fucosyltransferase 5 (FUT5).